The sequence spans 320 residues: Aspartate carbamoyltransferase catalytic subunit (320 aa).

Positions 68 and 69 each coordinate carbamoyl phosphate. Residue Lys96 participates in L-aspartate binding. Carbamoyl phosphate is bound by residues Arg118, His148, and Gln151. Positions 181 and 236 each coordinate L-aspartate. Carbamoyl phosphate contacts are provided by Gly277 and Pro278.

The protein belongs to the aspartate/ornithine carbamoyltransferase superfamily. ATCase family. In terms of assembly, heterododecamer (2C3:3R2) of six catalytic PyrB chains organized as two trimers (C3), and six regulatory PyrI chains organized as three dimers (R2).

The catalysed reaction is carbamoyl phosphate + L-aspartate = N-carbamoyl-L-aspartate + phosphate + H(+). It functions in the pathway pyrimidine metabolism; UMP biosynthesis via de novo pathway; (S)-dihydroorotate from bicarbonate: step 2/3. Functionally, catalyzes the condensation of carbamoyl phosphate and aspartate to form carbamoyl aspartate and inorganic phosphate, the committed step in the de novo pyrimidine nucleotide biosynthesis pathway. The sequence is that of Aspartate carbamoyltransferase catalytic subunit from Paracidovorax citrulli (strain AAC00-1) (Acidovorax citrulli).